The sequence spans 875 residues: Alanine--tRNA ligase (875 aa).

The Zn(2+) site is built by H564, H568, C666, and H670.

This sequence belongs to the class-II aminoacyl-tRNA synthetase family. Homotetramer. Zn(2+) serves as cofactor.

It localises to the cytoplasm. The enzyme catalyses tRNA(Ala) + L-alanine + ATP = L-alanyl-tRNA(Ala) + AMP + diphosphate. In terms of biological role, catalyzes the attachment of alanine to tRNA(Ala) in a two-step reaction: alanine is first activated by ATP to form Ala-AMP and then transferred to the acceptor end of tRNA(Ala). Also edits incorrectly charged Ser-tRNA(Ala) and Gly-tRNA(Ala) via its editing domain. The sequence is that of Alanine--tRNA ligase from Serratia proteamaculans (strain 568).